The following is a 313-amino-acid chain: MEKRKIILDCDPGHDDAIAMMMAAKHPAIDLLGITIVAGNQTLDKTLINGLNVCQKLEINVPVYAGMPQPIMRKQIVADNIHGETGLDGPVFEPLTRQAESTHAVKYIIDTLMASDGDITLVPVGPLSNIAVAMRMQPAILPKIREIVLMGGAYGTGNFTPSAEFNIFADPEAARVVFTSGVPLVMMGLDLTNQTVCTPDVIARMERAGGPAGELFSDIMNFTLKTQFENYGLAGGPVHDATCIGYLINPDGIKTQEMYVEVDVNSGPCYGRTVCDELGVLGKPANTKVGITIDTDWFWGLVEECVRGYIKTH.

Asp11 acts as the Proton acceptor in catalysis. The Ca(2+) site is built by Asp11, Asp16, and Val124. The substrate site is built by Gln227 and His239. Residue Asp240 participates in Ca(2+) binding.

This sequence belongs to the IUNH family. RihB subfamily. In terms of assembly, homotetramer. Requires Ca(2+) as cofactor.

The catalysed reaction is a pyrimidine ribonucleoside + H2O = a pyrimidine nucleobase + D-ribose. Hydrolyzes cytidine or uridine to ribose and cytosine or uracil, respectively. Has a clear preference for cytidine over uridine. Strictly specific for ribonucleosides. This Escherichia coli O9:H4 (strain HS) protein is Pyrimidine-specific ribonucleoside hydrolase RihB.